The following is a 145-amino-acid chain: Photosystem I reaction center subunit VI-1, chloroplastic (145 aa).

The N-terminal 50 residues, Met-1–Ala-50, are a transit peptide targeting the chloroplast. A helical membrane pass occupies residues Leu-102–Val-118.

The protein belongs to the psaH family.

It localises to the plastid. The protein resides in the chloroplast thylakoid membrane. Its function is as follows. Possible role could be the docking of the LHC I antenna complex to the core complex. The sequence is that of Photosystem I reaction center subunit VI-1, chloroplastic (PSAH1) from Arabidopsis thaliana (Mouse-ear cress).